A 349-amino-acid polypeptide reads, in one-letter code: Probable protease SohB (349 aa).

Topologically, residues 1-8 (MELLSEYG) are periplasmic. Residues 9-29 (LFLAKIVTVVLAIAAIAAIIV) form a helical membrane-spanning segment. At 30–349 (NVAQRNKRQR…WWQRGQKPLM (320 aa)) the chain is on the cytoplasmic side. S178 serves as the catalytic Nucleophile. The Proton donor/acceptor role is filled by K230.

The protein belongs to the peptidase S49 family.

It is found in the cell inner membrane. Multicopy suppressor of the HtrA (DegP) null phenotype. It is possibly a protease, not essential for bacterial viability. This is Probable protease SohB (sohB) from Escherichia coli (strain K12).